The sequence spans 1083 residues: Kinesin-like protein klp-19 (1083 aa).

Residues 6–328 form the Kinesin motor domain; sequence SLRVVVRARP…LRYADRAKQI (323 aa). 85–92 contributes to the ATP binding site; sequence GQTGSGKT. A coiled-coil region spans residues 408 to 435; sequence MSALTQKNSRLEEDKAKLQSMLTDVRNT. The segment covering 458-471 has biased composition (acidic residues); the sequence is TEESTTLADDDNDE. The disordered stretch occupies residues 458-479; sequence TEESTTLADDDNDETALGGQDD. Residues 487–650 are a coiled coil; that stretch reads LPELQAELDD…KSKLQKREND (164 aa). Residues 1044–1055 show a composition bias toward polar residues; sequence DDSQPSPSNSTF. Residues 1044–1083 form a disordered region; the sequence is DDSQPSPSNSTFVIGAAPTSEADGVPPIKRKSRRTDLGPL.

It belongs to the TRAFAC class myosin-kinesin ATPase superfamily. Kinesin family. In terms of tissue distribution, expressed in the gonad.

It localises to the nucleus. It is found in the nucleoplasm. The protein localises to the cytoplasm. The protein resides in the cytoskeleton. Its subcellular location is the spindle. It localises to the chromosome. In terms of biological role, required for chromosome movement and orientation on spindle poles in mitosis and meiosis. May play a role in early anterior-posterior chromosome movement in mitotic embryos. The sequence is that of Kinesin-like protein klp-19 from Caenorhabditis elegans.